The primary structure comprises 80 residues: Growth factor (80 aa).

Positions 1-19 are cleaved as a signal peptide; the sequence is MATRNLVASLLCIMYAVHA. One can recognise an EGF-like domain in the interval 29 to 73; the sequence is HVKVCNHDYENYCLNNGTCFTIALDNVSITPFCVCRINYEGSRCQ. 3 disulfide bridges follow: cysteine 33-cysteine 47, cysteine 41-cysteine 61, and cysteine 63-cysteine 72. N-linked (GlcNAc...) asparagine; by host glycans are attached at residues asparagine 44 and asparagine 54.

The protein resides in the secreted. The sequence is that of Growth factor from Oryctolagus cuniculus (Rabbit).